The sequence spans 177 residues: Large ribosomal subunit protein uL6 (177 aa).

Residues 154–171 (PEPYKGKGVRYADEQVRR) show a composition bias toward basic and acidic residues. Residues 154 to 177 (PEPYKGKGVRYADEQVRRKEAKKK) are disordered.

It belongs to the universal ribosomal protein uL6 family. Part of the 50S ribosomal subunit.

In terms of biological role, this protein binds to the 23S rRNA, and is important in its secondary structure. It is located near the subunit interface in the base of the L7/L12 stalk, and near the tRNA binding site of the peptidyltransferase center. The protein is Large ribosomal subunit protein uL6 of Marinobacter nauticus (strain ATCC 700491 / DSM 11845 / VT8) (Marinobacter aquaeolei).